The chain runs to 858 residues: Bifunctional uridylyltransferase/uridylyl-removing enzyme (858 aa).

Positions 1–324 are uridylyltransferase; it reads MSASVAEPPP…PATSGVTRVL (324 aa). Residues 325-681 form a uridylyl-removing region; it reads SPGRFVEKQG…ARPSPVGDAL (357 aa). Residues 443-565 form the HD domain; it reads VDQHILMVLR…VGSERRLTAL (123 aa). 2 consecutive ACT domains span residues 682-761 and 790-858; these read QVLV…PEPS and ILSV…AIAV.

This sequence belongs to the GlnD family. Mg(2+) serves as cofactor.

It catalyses the reaction [protein-PII]-L-tyrosine + UTP = [protein-PII]-uridylyl-L-tyrosine + diphosphate. The catalysed reaction is [protein-PII]-uridylyl-L-tyrosine + H2O = [protein-PII]-L-tyrosine + UMP + H(+). Its activity is regulated as follows. Uridylyltransferase (UTase) activity is inhibited by glutamine, while glutamine activates uridylyl-removing (UR) activity. Its function is as follows. Modifies, by uridylylation and deuridylylation, the PII regulatory proteins (GlnB and homologs), in response to the nitrogen status of the cell that GlnD senses through the glutamine level. Under low glutamine levels, catalyzes the conversion of the PII proteins and UTP to PII-UMP and PPi, while under higher glutamine levels, GlnD hydrolyzes PII-UMP to PII and UMP (deuridylylation). Thus, controls uridylylation state and activity of the PII proteins, and plays an important role in the regulation of nitrogen assimilation and metabolism. The sequence is that of Bifunctional uridylyltransferase/uridylyl-removing enzyme from Burkholderia pseudomallei (strain K96243).